The sequence spans 132 residues: uncharacterized protein (132 aa).

This sequence to M.jannaschii MJ0661.

This is an uncharacterized protein from Helicobacter pylori (strain J99 / ATCC 700824) (Campylobacter pylori J99).